Here is a 136-residue protein sequence, read N- to C-terminus: Small ribosomal subunit protein uS9 (136 aa).

The protein belongs to the universal ribosomal protein uS9 family.

This is Small ribosomal subunit protein uS9 from Synechococcus sp. (strain JA-2-3B'a(2-13)) (Cyanobacteria bacterium Yellowstone B-Prime).